The chain runs to 474 residues: Type I restriction enzyme EcoBI specificity subunit (474 aa).

Belongs to the type-I restriction system S methylase family. As to quaternary structure, the type I restriction/modification system is composed of three polypeptides R, M and S. The restriction enzyme has stoichiometry R(2)M(2)S(1) while the methyltransferase is M(2)S(1).

Its function is as follows. The specificity (S) subunit of a type I restriction enzyme; this subunit dictates DNA sequence specificity. The M and S subunits together form a methyltransferase (MTase) that methylates A-3 on the top strand and A-4 on the bottom strand of the sequence 5'-TGAN(8)TGCT-3'. In the presence of the R subunit the complex can also act as an endonuclease, binding to the same target sequence but cutting the DNA some distance from this site. Whether the DNA is cut or modified depends on the methylation state of the target sequence. When the target site is unmodified, the DNA is cut. When the target site is hemimethylated, the complex acts as a maintenance MTase modifying the DNA so that both strands become methylated. After locating a non-methylated recognition site, the enzyme complex serves as a molecular motor that translocates DNA in an ATP-dependent manner until a collision occurs that triggers cleavage. This Escherichia coli protein is Type I restriction enzyme EcoBI specificity subunit.